The primary structure comprises 933 residues: Progesterone receptor (933 aa).

The interval 1–164 (MTELKAKGPR…PATQGVLSPL (164 aa)) is AF3; mediates transcriptional activation. The segment at 1–256 (MTELKAKGPR…AAAGGGAAAV (256 aa)) is disordered. Residues 1 to 566 (MTELKAKGPR…YSFESLPQKI (566 aa)) form a modulating, Pro-Rich region. Ser20 is modified (phosphoserine). The LXXL motif 1 signature appears at 55–59 (LDGLL). Ser81 bears the Phosphoserine mark. An LXXL motif 2 motif is present at residues 115-119 (LETLL). 2 positions are modified to phosphoserine: Ser130 and Ser162. Positions 165 to 305 (MSRSGGKAGD…LATTVMDFIH (141 aa)) are mediates transcriptional transrepression. The Nuclear localization signal motif lies at 183–187 (KVLPR). 2 positions are modified to phosphoserine: Ser190 and Ser213. Acidic residues predominate over residues 220 to 231 (EVEEEDGSESEE). Residues 232 to 246 (SAGPLLKGKPRALGG) are compositionally biased toward low complexity. The residue at position 294 (Ser294) is a Phosphoserine; by MAPK1. The segment at 331–378 (GGAGAASAFAPPRSSPSASSTPVAVGDFPDCAYPPDAEPKDDAYPLYS) is disordered. Positions 335-350 (AASAFAPPRSSPSASS) are enriched in low complexity. Ser345 is modified (phosphoserine; by MAPK). Residue Lys388 forms a Glycyl lysine isopeptide (Lys-Gly) (interchain with G-Cter in SUMO); alternate linkage. Lys388 participates in a covalent cross-link: Glycyl lysine isopeptide (Lys-Gly) (interchain with G-Cter in ubiquitin); alternate. Ser400 carries the post-translational modification Phosphoserine; by CDK2. A disordered region spans residues 415–452 (PDFPLGPPPPLPPRAPPSRPGEAAVTAAPASASVSSAS). Residues 418–433 (PLGPPPPLPPRAPPSR) are compositionally biased toward pro residues. The span at 434-452 (PGEAAVTAAPASASVSSAS) shows a compositional bias: low complexity. Residues 456-546 (STLECILYKA…VYPPYLNYLR (91 aa)) are AF1; mediates transcriptional activation. A Glycyl lysine isopeptide (Lys-Gly) (interchain with G-Cter in SUMO) cross-link involves residue Lys531. 2 consecutive NR C4-type zinc fingers follow at residues 567–587 (CLIC…CGSC) and 603–627 (CAGR…LRKC). The nuclear receptor DNA-binding region spans 567 to 639 (CLICGDEASG…AGMVLGGRKF (73 aa)). Ser676 carries the post-translational modification Phosphoserine. The 235-residue stretch at 679-913 (QDIQLIPPLI…EFPEMMSEVI (235 aa)) folds into the NR LBD domain. An AF2; mediates transcriptional activation region spans residues 687 to 933 (LINLLMSIEP…MVKPLLFHKK (247 aa)). Arg766 lines the progesterone pocket.

The protein belongs to the nuclear hormone receptor family. As to quaternary structure, interacts with SMARD1 and UNC45A. Interacts with CUEDC2; the interaction promotes ubiquitination, decreases sumoylation, and represses transcriptional activity. Interacts with PIAS3; the interaction promotes sumoylation of PR in a hormone-dependent manner, inhibits DNA-binding, and alters nuclear export. Interacts with SP1; the interaction requires ligand-induced phosphorylation on Ser-345 by ERK1/2-MAPK. Interacts with PRMT2. Interacts with NCOA2 and NCOA1. Interacts with KLF9. Interacts with GTF2B. In terms of processing, phosphorylated on multiple serine sites. Several of these sites are hormone-dependent. Phosphorylation on Ser-294 is highly hormone-dependent and modulates ubiquitination and sumoylation on Lys-388. Phosphorylation on Ser-102 and Ser-345 also requires induction by hormone. Basal phosphorylation on Ser-81, Ser-162, Ser-190 and Ser-400 is increased in response to progesterone and can be phosphorylated in vitro by the CDK2-A1 complex. Increased levels of phosphorylation on Ser-400 also in the presence of EGF, heregulin, IGF, PMA and FBS. Phosphorylation at this site by CDK2 is ligand-independent, and increases nuclear translocation and transcriptional activity. Phosphorylation at Ser-162 and Ser-294, but not at Ser-190, is impaired during the G(2)/M phase of the cell cycle. Phosphorylation on Ser-345 by ERK1/2 MAPK is required for interaction with SP1. Post-translationally, sumoylation is hormone-dependent and represses transcriptional activity. Sumoylation on all three sites is enhanced by PIAS3. Desumoylated by SENP1. Sumoylation on Lys-388, the main site of sumoylation, is repressed by ubiquitination on the same site, and modulated by phosphorylation at Ser-294. Ubiquitination is hormone-dependent and represses sumoylation on the same site. Promoted by MAPK-mediated phosphorylation on Ser-294. Ubiquitinated by UBR5, leading to its degradation: UBR5 specifically recognizes and binds ligand-bound PGR when it is not associated with coactivators (NCOAs). In presence of NCOAs, the UBR5-degron is not accessible, preventing its ubiquitination and degradation. In terms of processing, palmitoylated by ZDHHC7 and ZDHHC21. Palmitoylation is required for plasma membrane targeting and for rapid intracellular signaling via ERK and AKT kinases and cAMP generation.

It localises to the nucleus. The protein localises to the cytoplasm. The steroid hormones and their receptors are involved in the regulation of eukaryotic gene expression and affect cellular proliferation and differentiation in target tissues. Transcriptional activator of several progesteron-dependent promoters in a variety of cell types. Involved in activation of SRC-dependent MAPK signaling on hormone stimulation. The sequence is that of Progesterone receptor (PGR) from Gorilla gorilla gorilla (Western lowland gorilla).